Consider the following 377-residue polypeptide: Deoxyribonuclease CdiA-o11 (377 aa).

Residues 81-84 carry the VENN CT cleavage motif motif; the sequence is VENN. Residues 85-233 form an inner membrane translocation domain (IMTD), targets to YciB region; sequence YLSTNQSLTF…ISFMSRNTAT (149 aa). The CT domain, sufficient to interact with CdiI stretch occupies residues 88–377; sequence TNQSLTFDKE…GVKVTVTQVK (290 aa). Residues 222-377 form a has DNase activity in vivo, cannot be expressed in the absence of CdiI region; that stretch reads AAISFMSRNT…GVKVTVTQVK (156 aa). Residues Glu257, Asp278, Ser289, and Lys291 contribute to the active site. Zn(2+) is bound by residues Glu257 and Asp278.

In terms of assembly, interacts with cognate immunity protein CdiI-o11-EC869, which blocks its toxic DNase activity. Zn(2+) serves as cofactor.

The protein resides in the target cell. It localises to the target cell cytoplasm. In terms of biological role, toxic component of a toxin-immunity protein module, which functions as a cellular contact-dependent growth inhibition (CDI) system. CDI modules allow bacteria to communicate with and inhibit the growth of closely related neighboring bacteria in a contact-dependent fashion. The C-terminal 289 residues (the CT fragment) has a strong DNase activity in the presence of Zn(2+), completely degrading supercoiled and linear plasmids, and inhibits growth. In the presence of Mg(2+) it nicks dsDNA. Toxic activity is neutralized by coexpression of the cognate immunity protein CdiI-o11-EC869, but not by non-cognate immunity proteins from other toxin-immunity modules or other strains of E.coli. Gains access to the cytoplasm of target cells by using integral inner membrane protein YciB. Its function is as follows. Expression of this locus confers protection against other bacteria carrying the locus. The chain is Deoxyribonuclease CdiA-o11 (cdiA4) from Escherichia coli O157:H7 (strain EC869).